The following is a 285-amino-acid chain: Heme oxygenase 3, chloroplastic (285 aa).

Residues 1 to 58 constitute a chloroplast transit peptide; it reads MATTRLNPSCHFPASTRLSCESYLGLRTTGRISYARTLTAPRGYLAVKANGGQASVVT. His89 is a binding site for heme b. Over residues 89–105 the composition is skewed to basic and acidic residues; sequence HTKDQAREGEKESRSPE. The tract at residues 89–109 is disordered; it reads HTKDQAREGEKESRSPEEGPV.

The protein belongs to the heme oxygenase family. In terms of tissue distribution, widely expressed at low levels.

The protein localises to the plastid. Its subcellular location is the chloroplast. It carries out the reaction heme b + 3 reduced [NADPH--hemoprotein reductase] + 3 O2 = biliverdin IXalpha + CO + Fe(2+) + 3 oxidized [NADPH--hemoprotein reductase] + 3 H2O + H(+). Catalyzes the opening of the heme ring to form the open-chain tetrapyrrole biliverdin IX with the release of iron and carbon monoxide (CO). Produces specifically the biliverdin IX-alpha isomer. Plays a minor role in phytochrome assembly and photomorphogenesis. The chain is Heme oxygenase 3, chloroplastic (HO3) from Arabidopsis thaliana (Mouse-ear cress).